Here is a 229-residue protein sequence, read N- to C-terminus: Large ribosomal subunit protein uL1 (229 aa).

It belongs to the universal ribosomal protein uL1 family. In terms of assembly, part of the 50S ribosomal subunit.

Functionally, binds directly to 23S rRNA. The L1 stalk is quite mobile in the ribosome, and is involved in E site tRNA release. Protein L1 is also a translational repressor protein, it controls the translation of the L11 operon by binding to its mRNA. The chain is Large ribosomal subunit protein uL1 from Pasteurella multocida (strain Pm70).